The chain runs to 80 residues: U6-ctenitoxin-Pn1a (80 aa).

Residues 1–21 (MWLKIQVFVLALALITLGIQA) form the signal peptide. Residues 22 to 37 (EPNSGPNNPLIQEEAR) constitute a propeptide that is removed on maturation. Disulfide bonds link C39–C54, C46–C59, C53–C69, and C61–C67. Residues 72 to 80 (TLGDLFGRR) constitute a propeptide that is removed on maturation.

Belongs to the neurotoxin 02 (plectoxin) family. 01 (Tx3) subfamily. Expressed by the venom gland.

It is found in the secreted. In terms of biological role, antagonist of L-type calcium channels (Cav1/CACNA1). This is U6-ctenitoxin-Pn1a from Phoneutria nigriventer (Brazilian armed spider).